A 430-amino-acid polypeptide reads, in one-letter code: Enolase (430 aa).

Gln165 contributes to the (2R)-2-phosphoglycerate binding site. The Proton donor role is filled by Glu207. 3 residues coordinate Mg(2+): Asp244, Glu287, and Asp314. 4 residues coordinate (2R)-2-phosphoglycerate: Lys339, Arg368, Ser369, and Lys390. Lys339 serves as the catalytic Proton acceptor.

Belongs to the enolase family. Component of the RNA degradosome, a multiprotein complex involved in RNA processing and mRNA degradation. The cofactor is Mg(2+).

It localises to the cytoplasm. It is found in the secreted. Its subcellular location is the cell surface. The catalysed reaction is (2R)-2-phosphoglycerate = phosphoenolpyruvate + H2O. It participates in carbohydrate degradation; glycolysis; pyruvate from D-glyceraldehyde 3-phosphate: step 4/5. Catalyzes the reversible conversion of 2-phosphoglycerate (2-PG) into phosphoenolpyruvate (PEP). It is essential for the degradation of carbohydrates via glycolysis. The chain is Enolase from Xylella fastidiosa (strain 9a5c).